Consider the following 57-residue polypeptide: Small ribosomal subunit protein eS31 (57 aa).

Residues cysteine 29, cysteine 32, cysteine 47, and cysteine 50 each contribute to the Zn(2+) site. The C4-type zinc finger occupies 29 to 50; the sequence is CSRCGKGTYMSEHKDRNTCGKC.

It belongs to the eukaryotic ribosomal protein eS31 family. Part of the 30S ribosomal subunit. Requires Zn(2+) as cofactor.

The protein is Small ribosomal subunit protein eS31 of Nitrosopumilus maritimus (strain SCM1).